The chain runs to 517 residues: Protein IQ-DOMAIN 13 (517 aa).

The segment at 1 to 11 (MGKKGSWFSAI) is calmodulin-binding. 2 disordered regions span residues 1–60 (MGKK…FLPI) and 81–147 (VFRP…PRAV). A compositionally biased stretch (basic residues) spans 40 to 49 (KKKKGFGKKL). A compositionally biased stretch (polar residues) spans 89 to 99 (DRANSSSTSVA). Positions 134-144 (PKPPSPKPPSP) are enriched in pro residues. IQ domains follow at residues 168-196 (KNAY…GLVR) and 197-218 (LQGV…KYMQ). Disordered regions lie at residues 324–407 (QPFR…LTSC) and 425–452 (KLRA…SSFP). Residues 328-342 (LTPTRPSLSPQPQSS) are compositionally biased toward low complexity. A compositionally biased stretch (polar residues) spans 343-367 (NQNHFRLNNSFDTSTPNSSKSTFVT). Residues 432-448 (PKERMDRTPVSTNEKRR) are compositionally biased toward basic and acidic residues.

This sequence belongs to the IQD family. Binds to multiple calmodulin (CaM) in the presence of Ca(2+) and CaM-like proteins. As to expression, expressed in vessels of roots, cotyledons and leaves, as well as in trichomes.

It is found in the cell membrane. Its subcellular location is the cytoplasm. The protein localises to the cytoskeleton. Its function is as follows. May be involved in cooperative interactions with calmodulins or calmodulin-like proteins. Recruits calmodulin proteins to microtubules, thus being a potential scaffold in cellular signaling and trafficking. Regulates the formation of oval xylem secondary cell-wall deposition pits through microtubule-dependent lateral inhibition of Rho GTPase domains, thus confining the area of active ROP domains within the lattice of the cortical microtubules. May associate with nucleic acids and regulate gene expression at the transcriptional or post-transcriptional level. This Arabidopsis thaliana (Mouse-ear cress) protein is Protein IQ-DOMAIN 13.